Consider the following 485-residue polypeptide: D-alanine--D-alanyl carrier protein ligase (485 aa).

An ATP-binding site is contributed by Thr-144–Ser-145. Asp-189 is a binding site for D-alanine. Asn-284–Thr-289 lines the ATP pocket. Val-293 contributes to the D-alanine binding site. Residues Asp-365 and Lys-473 each coordinate ATP. Lys-473 is a binding site for D-alanine.

It belongs to the ATP-dependent AMP-binding enzyme family. DltA subfamily.

The protein localises to the cytoplasm. The catalysed reaction is holo-[D-alanyl-carrier protein] + D-alanine + ATP = D-alanyl-[D-alanyl-carrier protein] + AMP + diphosphate. It participates in cell wall biogenesis; lipoteichoic acid biosynthesis. In terms of biological role, catalyzes the first step in the D-alanylation of lipoteichoic acid (LTA), the activation of D-alanine and its transfer onto the D-alanyl carrier protein (Dcp) DltC. In an ATP-dependent two-step reaction, forms a high energy D-alanyl-AMP intermediate, followed by transfer of the D-alanyl residue as a thiol ester to the phosphopantheinyl prosthetic group of the Dcp. D-alanylation of LTA plays an important role in modulating the properties of the cell wall in Gram-positive bacteria, influencing the net charge of the cell wall. This chain is D-alanine--D-alanyl carrier protein ligase, found in Staphylococcus aureus (strain USA300).